The sequence spans 484 residues: Cobyric acid synthase (484 aa).

Positions 248 to 435 (VLKVIVPVLP…LHGLFEGSQS (188 aa)) constitute a GATase cobBQ-type domain. The Nucleophile role is filled by C329. H427 is an active-site residue.

Belongs to the CobB/CobQ family. CobQ subfamily.

The protein operates within cofactor biosynthesis; adenosylcobalamin biosynthesis. In terms of biological role, catalyzes amidations at positions B, D, E, and G on adenosylcobyrinic A,C-diamide. NH(2) groups are provided by glutamine, and one molecule of ATP is hydrogenolyzed for each amidation. The protein is Cobyric acid synthase of Pseudomonas putida (strain GB-1).